A 1232-amino-acid polypeptide reads, in one-letter code: Pyruvate:ferredoxin oxidoreductase (1232 aa).

T31 is a pyruvate binding site. E64 lines the thiamine diphosphate pocket. Residue R114 coordinates pyruvate. CoA is bound by residues 427-431 (ADGTV), K459, N560, and N602. 2 4Fe-4S ferredoxin-type domains span residues 680–709 (NVPQWVPENCIQCNQCAFVCPHSAILPVLA) and 736–767 (FRIQINTLDCMGCGNCADICPPKEKALVMQPL). Residues C689, C692, C695, C699, C745, C748, C751, C755, C812, and C815 each contribute to the [4Fe-4S] cluster site. Residues E817, C840, and 962–965 (GDGW) each bind thiamine diphosphate. Residue C840 participates in [4Fe-4S] cluster binding. D963 contacts Mg(2+). D983 and N985 together coordinate Ca(2+). Mg(2+)-binding residues include T991 and V993. 991–996 (TEVYSN) provides a ligand contact to thiamine diphosphate. Residues A1056, F1059, G1061, and S1063 each coordinate Ca(2+). C1071 is a [4Fe-4S] cluster binding site. C1195 and C1212 are disulfide-bonded. The segment at 1197–1232 (RDDTPMMARPDSGEACDQNRAGTSEQQGDLSKRTKK) is disordered. Residues 1216-1225 (RAGTSEQQGD) show a composition bias toward polar residues.

This sequence belongs to the pyruvate:ferredoxin/flavodoxin oxidoreductase family. As to quaternary structure, homodimer. Requires [4Fe-4S] cluster as cofactor. The cofactor is thiamine diphosphate. It depends on Mg(2+) as a cofactor.

The protein resides in the cytoplasm. It carries out the reaction 2 oxidized [2Fe-2S]-[ferredoxin] + pyruvate + CoA = 2 reduced [2Fe-2S]-[ferredoxin] + acetyl-CoA + CO2 + H(+). Functionally, catalyzes the ferredoxin-dependent oxidative decarboxylation of pyruvate. Required for the transfer of electrons from pyruvate to ferredoxin. Ferredoxin I and ferredoxin II, which are single 4Fe-4S cluster ferredoxins are the most effective electron carriers of POR. This chain is Pyruvate:ferredoxin oxidoreductase, found in Desulfocurvibacter africanus (Desulfovibrio africanus).